Here is an 87-residue protein sequence, read N- to C-terminus: UPF0235 protein TGRD_618 (87 aa).

Belongs to the UPF0235 family.

This Endomicrobium trichonymphae protein is UPF0235 protein TGRD_618.